A 55-amino-acid polypeptide reads, in one-letter code: RRLHGQAINRPGSCPRVMIYCPARHPPNKCTSDYDCPKPQKCCPGYCGKQCYQPE.

The WAP domain occupies 7-55 (AINRPGSCPRVMIYCPARHPPNKCTSDYDCPKPQKCCPGYCGKQCYQPE).

Post-translationally, glycosylated.

In terms of biological role, inhibits calcium transport into spermatozoa. The protein is Caltrin-like protein 2 of Cavia porcellus (Guinea pig).